A 296-amino-acid chain; its full sequence is L-isoleucine 3(1)-dioxygenase (296 aa).

H176, D178, and H267 together coordinate Fe cation.

The protein belongs to the iron/ascorbate-dependent oxidoreductase family. The cofactor is L-ascorbate. Fe(2+) serves as cofactor.

It catalyses the reaction L-isoleucine + 2-oxoglutarate + O2 = 3(1)-hydroxy-L-isoleucine + succinate + CO2. Its function is as follows. Catalyzes the hydroxylation of L-isoleucine at the C-4' position to form L-4'-hydroxyisoleucine (4'-HIL). Exhibits low activity with L-valine and L-methionine. This Pantoea ananatis (strain AJ13355) protein is L-isoleucine 3(1)-dioxygenase.